A 306-amino-acid polypeptide reads, in one-letter code: L-lactate dehydrogenase (306 aa).

Residues Val-11, Asp-32, Lys-37, and Gly-76–Ala-77 each bind NAD(+). Residues Gln-79 and Arg-85 each contribute to the substrate site. NAD(+)-binding positions include Ser-98, Val-115–Asn-117, and Ser-140. Asn-117–Asp-120 lines the substrate pocket. Position 145–148 (Asp-145–Arg-148) interacts with substrate. Residues Arg-150 and His-165 each contribute to the beta-D-fructose 1,6-bisphosphate site. His-172 serves as the catalytic Proton acceptor. Tyr-214 is modified (phosphotyrosine). Residue Thr-223 participates in substrate binding.

The protein belongs to the LDH/MDH superfamily. LDH family. As to quaternary structure, homotetramer.

The protein resides in the cytoplasm. The catalysed reaction is (S)-lactate + NAD(+) = pyruvate + NADH + H(+). It functions in the pathway fermentation; pyruvate fermentation to lactate; (S)-lactate from pyruvate: step 1/1. With respect to regulation, allosterically activated by fructose 1,6-bisphosphate (FBP). Functionally, catalyzes the conversion of lactate to pyruvate. This is L-lactate dehydrogenase from Synechococcus sp. (strain JA-3-3Ab) (Cyanobacteria bacterium Yellowstone A-Prime).